A 101-amino-acid polypeptide reads, in one-letter code: Ubiquitin-related modifier 1 (101 aa).

Position 101 is a 1-thioglycine (Gly101). A Glycyl lysine isopeptide (Gly-Lys) (interchain with K-? in acceptor proteins) cross-link involves residue Gly101.

It belongs to the URM1 family. In terms of assembly, component of a complex at least composed of URM1, CTU2/NCS2 and CTU1/ATPBD3. Post-translationally, C-terminal thiocarboxylation occurs in 2 steps, it is first acyl-adenylated (-COAMP) via the hesA/moeB/thiF part of MOCS3, then thiocarboxylated (-COSH) via the rhodanese domain of MOCS3.

It localises to the cytoplasm. The protein operates within tRNA modification; 5-methoxycarbonylmethyl-2-thiouridine-tRNA biosynthesis. Acts as a sulfur carrier required for 2-thiolation of mcm(5)S(2)U at tRNA wobble positions of cytosolic tRNA(Lys), tRNA(Glu) and tRNA(Gln). Serves as sulfur donor in tRNA 2-thiolation reaction by being thiocarboxylated (-COSH) at its C-terminus by MOCS3. The sulfur is then transferred to tRNA to form 2-thiolation of mcm(5)S(2)U. Also acts as a ubiquitin-like protein (UBL) that is covalently conjugated via an isopeptide bond to lysine residues of target proteins such as MOCS3, ATPBD3, CTU2, USP15 and CAS. The thiocarboxylated form serves as substrate for conjugation and oxidative stress specifically induces the formation of UBL-protein conjugates. The protein is Ubiquitin-related modifier 1 of Bos taurus (Bovine).